We begin with the raw amino-acid sequence, 110 residues long: PHD finger-like domain-containing protein 5B (110 aa).

Belongs to the PHF5 family.

This is PHD finger-like domain-containing protein 5B from Arabidopsis thaliana (Mouse-ear cress).